A 379-amino-acid polypeptide reads, in one-letter code: Cytochrome b (379 aa).

A run of 4 helical transmembrane segments spans residues 34 to 54 (YGSL…FLSM), 78 to 99 (WLLR…YLHA), 114 to 134 (WNIG…GYVL), and 179 to 199 (FFAF…LHIM). Heme b contacts are provided by histidine 84 and histidine 98. Histidine 183 and histidine 197 together coordinate heme b. Histidine 202 contacts a ubiquinone. A run of 4 helical transmembrane segments spans residues 227-247 (IKDT…VLFE), 289-309 (LGGV…PLTS), 321-341 (LNKT…WIGG), and 349-369 (IIIG…SPTI).

This sequence belongs to the cytochrome b family. As to quaternary structure, the main subunits of complex b-c1 are: cytochrome b, cytochrome c1 and the Rieske protein. It depends on heme b as a cofactor.

The protein resides in the mitochondrion inner membrane. Component of the ubiquinol-cytochrome c reductase complex (complex III or cytochrome b-c1 complex) that is part of the mitochondrial respiratory chain. The b-c1 complex mediates electron transfer from ubiquinol to cytochrome c. Contributes to the generation of a proton gradient across the mitochondrial membrane that is then used for ATP synthesis. The sequence is that of Cytochrome b (MT-CYB) from Lumbricus terrestris (Common earthworm).